Consider the following 238-residue polypeptide: tRNA (guanine-N(7)-)-methyltransferase (238 aa).

Residues Glu68, Glu93, Asp120, and Asp143 each coordinate S-adenosyl-L-methionine. Asp143 is an active-site residue. Substrate-binding positions include Lys147, Asp179, and 216 to 219 (TKFE).

This sequence belongs to the class I-like SAM-binding methyltransferase superfamily. TrmB family.

The enzyme catalyses guanosine(46) in tRNA + S-adenosyl-L-methionine = N(7)-methylguanosine(46) in tRNA + S-adenosyl-L-homocysteine. Its pathway is tRNA modification; N(7)-methylguanine-tRNA biosynthesis. In terms of biological role, catalyzes the formation of N(7)-methylguanine at position 46 (m7G46) in tRNA. The sequence is that of tRNA (guanine-N(7)-)-methyltransferase from Shewanella woodyi (strain ATCC 51908 / MS32).